Consider the following 326-residue polypeptide: RNA/RNP complex-1-interacting phosphatase (326 aa).

Positions 1–28 (MNQWHYGRYSRGRDFTARAPPKKKGKNQ) are disordered. Positions 59-206 (FEAKLMPEEC…LQKRRVRKNQ (148 aa)) constitute a Tyrosine-protein phosphatase domain. Residue C150 is the Phosphocysteine intermediate of the active site. Residue 151–156 (THGLNR) participates in substrate binding. The active-site Proton donor/acceptor is R156. The tract at residues 200 to 258 (RRVRKNQNASASRSGGLEDSAHLTEQVHTTNKPVNKGPKKSRRGGHLESSQHVQTQSSA) is disordered. A compositionally biased stretch (polar residues) spans 247 to 258 (ESSQHVQTQSSA).

This sequence belongs to the protein-tyrosine phosphatase family. Non-receptor class dual specificity subfamily. In terms of assembly, monomer. May interact with SFRS7 and SFRS9/SRP30C.

The protein resides in the nucleus. Its subcellular location is the nucleus speckle. Functionally, possesses RNA 5'-triphosphatase and diphosphatase activities, but displays a poor protein-tyrosine phosphatase activity. In addition, has phosphatase activity with ATP, ADP and O-methylfluorescein phosphate (in vitro). Binds to RNA. May participate in nuclear mRNA metabolism. The protein is RNA/RNP complex-1-interacting phosphatase (Dusp11) of Rattus norvegicus (Rat).